The chain runs to 229 residues: Large ribosomal subunit protein uL1c (229 aa).

Belongs to the universal ribosomal protein uL1 family. As to quaternary structure, part of the 50S ribosomal subunit.

Its subcellular location is the plastid. The protein localises to the chloroplast. Functionally, binds directly to 23S rRNA. Might be involved in E site tRNA release (Potential). The polypeptide is Large ribosomal subunit protein uL1c (rpl1) (Porphyra purpurea (Red seaweed)).